The chain runs to 201 residues: Glutathione peroxidase 1 (201 aa).

Ser32 bears the Phosphoserine mark. The active site involves Sec47. Sec47 is a non-standard amino acid (selenocysteine). An N6-acetyllysine; alternate mark is found at Lys86, Lys112, and Lys146. N6-succinyllysine; alternate occurs at positions 86, 112, and 146. Phosphoserine is present on residues Ser195 and Ser199.

It belongs to the glutathione peroxidase family. As to quaternary structure, homotetramer. Interacts with MIEN1. During periods of oxidative stress, Sec-47 may react with a superoxide radical, irreversibly lose hydroselenide and be converted to dehydroalanine.

The protein resides in the cytoplasm. It is found in the mitochondrion. It catalyses the reaction 2 glutathione + H2O2 = glutathione disulfide + 2 H2O. The catalysed reaction is a hydroperoxy polyunsaturated fatty acid + 2 glutathione = a hydroxy polyunsaturated fatty acid + glutathione disulfide + H2O. The enzyme catalyses tert-butyl hydroperoxide + 2 glutathione = tert-butanol + glutathione disulfide + H2O. It carries out the reaction cumene hydroperoxide + 2 glutathione = 2-phenylpropan-2-ol + glutathione disulfide + H2O. It catalyses the reaction (13S)-hydroperoxy-(9Z,11E)-octadecadienoate + 2 glutathione = (13S)-hydroxy-(9Z,11E)-octadecadienoate + glutathione disulfide + H2O. The catalysed reaction is (9S)-hydroperoxy-(10E,12Z)-octadecadienoate + 2 glutathione = (9S)-hydroxy-(10E,12Z)-octadecadienoate + glutathione disulfide + H2O. The enzyme catalyses (5S)-hydroperoxy-(6E,8Z,11Z,14Z)-eicosatetraenoate + 2 glutathione = (5S)-hydroxy-(6E,8Z,11Z,14Z)-eicosatetraenoate + glutathione disulfide + H2O. It carries out the reaction (12S)-hydroperoxy-(5Z,8Z,10E,14Z)-eicosatetraenoate + 2 glutathione = (12S)-hydroxy-(5Z,8Z,10E,14Z)-eicosatetraenoate + glutathione disulfide + H2O. It catalyses the reaction (12R)-hydroperoxy-(5Z,8Z,10E,14Z)-eicosatetraenoate + 2 glutathione = (12R)-hydroxy-(5Z,8Z,10E,14Z)-eicosatetraenoate + glutathione disulfide + H2O. The catalysed reaction is (15S)-hydroperoxy-(5Z,8Z,11Z,13E)-eicosatetraenoate + 2 glutathione = (15S)-hydroxy-(5Z,8Z,11Z,13E)-eicosatetraenoate + glutathione disulfide + H2O. The enzyme catalyses (5S)-hydroperoxy-(6E,8Z,11Z,14Z,17Z)-eicosapentaenoate + 2 glutathione = (5S)-hydroxy-(6E,8Z,11Z,14Z,17Z)-eicosapentaenoate + glutathione disulfide + H2O. It carries out the reaction (12S)-hydroperoxy-(5Z,8Z,10E,14Z,17Z)-eicosapentaenoate + 2 glutathione = (12S)-hydroxy-(5Z,8Z,10E,14Z,17Z)-eicosapentaenoate + glutathione disulfide + H2O. It catalyses the reaction (15S)-hydroperoxy-(5Z,8Z,11Z,13E,17Z)-eicosapentaenoate + 2 glutathione = (15S)-hydroxy-(5Z,8Z,11Z,13E,17Z)-eicosapentaenoate + glutathione disulfide + H2O. The catalysed reaction is (15S)-hydroperoxy-(11Z,13E)-eicosadienoate + 2 glutathione = (15S)-hydroxy-(11Z,13E)-eicosadienoate + glutathione disulfide + H2O. The enzyme catalyses (17S)-hydroperoxy-(4Z,7Z,10Z,13Z,15E,19Z)-docosahexaenoate + 2 glutathione = (17S)-hydroxy-(4Z,7Z,10Z,13Z,15E,19Z)-docosahexaenoate + glutathione disulfide + H2O. In terms of biological role, catalyzes the reduction of hydroperoxides in a glutathione-dependent manner thus regulating cellular redox homeostasis. Can reduce small soluble hydroperoxides such as H2O2, cumene hydroperoxide and tert-butyl hydroperoxide, as well as several fatty acid-derived hydroperoxides. In platelets catalyzes the reduction of 12-hydroperoxyeicosatetraenoic acid, the primary product of the arachidonate 12-lipoxygenase pathway. This chain is Glutathione peroxidase 1 (GPX1), found in Pongo pygmaeus (Bornean orangutan).